The sequence spans 361 residues: Peptide chain release factor 1 (361 aa).

Gln235 carries the N5-methylglutamine modification. Positions 286–305 (IDSARSAERKQKVGSGDRSE) are disordered.

Belongs to the prokaryotic/mitochondrial release factor family. Post-translationally, methylated by PrmC. Methylation increases the termination efficiency of RF1.

Its subcellular location is the cytoplasm. In terms of biological role, peptide chain release factor 1 directs the termination of translation in response to the peptide chain termination codons UAG and UAA. The polypeptide is Peptide chain release factor 1 (Rhodopseudomonas palustris (strain HaA2)).